The sequence spans 367 residues: Type II methyltransferase M.CviJI (367 aa).

In terms of domain architecture, SAM-dependent MTase C5-type spans 3–367 (FRTLELFAGI…EYLGYLVQYD (365 aa)). Cys73 is an active-site residue.

This sequence belongs to the class I-like SAM-binding methyltransferase superfamily. C5-methyltransferase family.

The catalysed reaction is a 2'-deoxycytidine in DNA + S-adenosyl-L-methionine = a 5-methyl-2'-deoxycytidine in DNA + S-adenosyl-L-homocysteine + H(+). A methylase that recognizes the double-stranded sequence 5'-RGCY-3', methylates C-3 on both strands, and protects the DNA from cleavage by the CviJI endonuclease. The protein is Type II methyltransferase M.CviJI of Chlorella (PBCV-IL3A).